A 279-amino-acid chain; its full sequence is Zinc-finger homeodomain protein 1 (279 aa).

Positions 1 to 30 are enriched in acidic residues; the sequence is MEFEDNNNNNDEEQEEDMNLHEEEEDDDAV. A disordered region spans residues 1-62; that stretch reads MEFEDNNNNN…TTSTGGGGGF (62 aa). A ZF-HD dimerization-type zinc finger spans residues 75–124; sequence FRECLKNQAVNIGGHAVDGCGEFMPAGIEGTIDALKCAACGCHRNFHRKE. Disordered regions lie at residues 128–199 and 245–279; these read FHHA…TKFT and NNKH…QDQP. The segment covering 134 to 143 has biased composition (pro residues); that stretch reads QHQPPPPPPG. Positions 191 to 254 form a DNA-binding region, homeobox; atypical; it reads RKRHRTKFTA…NNKHTLGKSP (64 aa).

In terms of assembly, homo- and heterodimer with other ZFHD proteins. Interacts with MIF1 and MIF2; these interactions prevent nuclear localization and DNA-binding to inhibit transcription regulation activity. Binds to ZHD2, ZHD3, ZHD4, ZHD5, ZHD6, ZHD7, ZHD8, ZHD9, ZHD10 and ZHD11. Mostly expressed in flowers and inflorescence.

Its subcellular location is the nucleus. Putative transcription factor. The chain is Zinc-finger homeodomain protein 1 (ZHD1) from Arabidopsis thaliana (Mouse-ear cress).